We begin with the raw amino-acid sequence, 231 residues long: Small ribosomal subunit protein uS3 (231 aa).

The 80-residue stretch at valine 18 to alanine 97 folds into the KH type-2 domain.

The protein belongs to the universal ribosomal protein uS3 family. As to quaternary structure, part of the 30S ribosomal subunit.

Binds the lower part of the 30S subunit head. The polypeptide is Small ribosomal subunit protein uS3 (Sulfolobus acidocaldarius (strain ATCC 33909 / DSM 639 / JCM 8929 / NBRC 15157 / NCIMB 11770)).